Here is a 334-residue protein sequence, read N- to C-terminus: Cytosolic Fe-S cluster assembly factor NUBP1 homolog (334 aa).

The interval 1–24 (MSSAEVTAAAKPADAPEHCPGTAS) is disordered. [4Fe-4S] cluster contacts are provided by C19, C33, C36, and C42. 72–79 (GKGGVGKS) contacts ATP. [4Fe-4S] cluster is bound by residues C247 and C250.

It belongs to the Mrp/NBP35 ATP-binding proteins family. NUBP1/NBP35 subfamily. As to quaternary structure, heterotetramer of 2 NUBP1 and 2 NUBP2 chains. Requires [4Fe-4S] cluster as cofactor.

It localises to the cytoplasm. In terms of biological role, component of the cytosolic iron-sulfur (Fe/S) protein assembly (CIA) machinery. Required for maturation of extramitochondrial Fe-S proteins. The NUBP1-NUBP2 heterotetramer forms a Fe-S scaffold complex, mediating the de novo assembly of an Fe-S cluster and its transfer to target apoproteins. The polypeptide is Cytosolic Fe-S cluster assembly factor NUBP1 homolog (Culex quinquefasciatus (Southern house mosquito)).